The following is a 601-amino-acid chain: Jacalin-related lectin 3 (601 aa).

Jacalin-type lectin domains are found at residues Pro13–Pro155, Ala240–Glu382, and Pro438–His583.

Belongs to the jacalin lectin family.

This chain is Jacalin-related lectin 3 (JAL3), found in Arabidopsis thaliana (Mouse-ear cress).